The following is a 124-amino-acid chain: Fluoride-specific ion channel FluC (124 aa).

A run of 4 helical transmembrane segments spans residues 4-24 (IFYI…TTLV), 35-55 (YATF…FGYL), 63-83 (PYLK…FSAF), and 96-116 (ILIA…ATWT). 2 residues coordinate Na(+): Gly-75 and Thr-78.

Belongs to the fluoride channel Fluc/FEX (TC 1.A.43) family.

The protein resides in the cell inner membrane. It catalyses the reaction fluoride(in) = fluoride(out). With respect to regulation, na(+) is not transported, but it plays an essential structural role and its presence is essential for fluoride channel function. Its function is as follows. Fluoride-specific ion channel. Important for reducing fluoride concentration in the cell, thus reducing its toxicity. This is Fluoride-specific ion channel FluC from Flavobacterium psychrophilum (strain ATCC 49511 / DSM 21280 / CIP 103535 / JIP02/86).